The chain runs to 475 residues: CAAX prenyl protease 1 homolog (475 aa).

Residues 1-18 (MGMWASVDAMWDFPAEKR) are Lumenal-facing. A helical membrane pass occupies residues 19 to 39 (IFGAVLLFSWTVYLWETFLAQ). At 40–81 (RQRRIYKTTTRVPAELEQIMDSDTFEKSRLYQLDKSTFSFWS) the chain is on the nuclear side. The chain crosses the membrane as a helical span at residues 82-102 (GLYSEVEGTFILLFGGIPYLW). Residues 103 to 123 (RLSGQFCSSAGFGPEYEIIQS) lie on the Lumenal side of the membrane. A helical transmembrane segment spans residues 124-144 (LVFLLLATLFSALTGLPWSLY). Residues 145–170 (NTFVIEEKHGFNHQTLEFFMKDAIKK) lie on the Nuclear side of the membrane. Residues 171–191 (FIVTQCILLPVSALLLYIIKI) traverse the membrane as a helical segment. The Lumenal segment spans residues 192-195 (GGDY). Residues 196-216 (FFIYAWLFTLVVSLVLVTIYA) form a helical membrane-spanning segment. Residues 217 to 347 (DYIAPLFDKF…GHWKLGHTVK (131 aa)) are Nuclear-facing. Residues 293-314 (DNQEESGMEARNEGEGDSEEVK) form a disordered region. The segment covering 300-314 (MEARNEGEGDSEEVK) has biased composition (basic and acidic residues). Residue His-335 coordinates Zn(2+). Glu-336 is an active-site residue. His-339 contributes to the Zn(2+) binding site. A helical transmembrane segment spans residues 348–368 (NIIISQMNSFLCFFLFAVLIG). At 369–382 (RRELFAAFGFYDSQ) the chain is on the lumenal side. Residues 383-405 (PTLIGLLIIFQFIFSPYNEVLSF) traverse the membrane as a helical segment. Residues 406–475 (CLTVLSRRFE…LQALKNAKQD (70 aa)) lie on the Nuclear side of the membrane. A Zn(2+)-binding site is contributed by Glu-415.

Belongs to the peptidase M48A family. Zn(2+) is required as a cofactor.

It is found in the endoplasmic reticulum membrane. The protein localises to the nucleus inner membrane. It localises to the early endosome membrane. Its subcellular location is the late endosome membrane. It carries out the reaction Hydrolyzes the peptide bond -P2-(S-farnesyl or geranylgeranyl)C-P1'-P2'-P3'-COOH where P1' and P2' are amino acids with aliphatic side chains and P3' is any C-terminal residue.. With respect to regulation, inhibited by HIV protease inhibitors, such as lopinavir, tipranavir and nelfinavir, leading to defects in lamin A/LMNA maturation and accumulation of prelamin-A/C precursors in cells. This causes defects in nuclear envelope integrity and release of DNA in the cytosol, activating the AIM2 inflammasome. In terms of biological role, transmembrane metalloprotease whose catalytic activity is critical for processing lamin A/LMNA on the inner nuclear membrane and clearing clogged translocons on the endoplasmic reticulum. Proteolytically removes the C-terminal three residues of farnesylated proteins. Also plays an antiviral role independently of its protease activity by restricting enveloped RNA and DNA viruses. Mechanistically, controls IFITM antiviral pathway to hinder viruses from breaching the endosomal barrier by modulating membrane fluidity. This Mus musculus (Mouse) protein is CAAX prenyl protease 1 homolog.